Reading from the N-terminus, the 421-residue chain is UDP-N-acetylglucosamine 1-carboxyvinyltransferase (421 aa).

22 to 23 contacts phosphoenolpyruvate; sequence KN. R93 is a binding site for UDP-N-acetyl-alpha-D-glucosamine. Residue C117 is the Proton donor of the active site. C117 carries the 2-(S-cysteinyl)pyruvic acid O-phosphothioketal modification. Residues 122-126, D308, and L330 contribute to the UDP-N-acetyl-alpha-D-glucosamine site; that span reads RPVDL.

It belongs to the EPSP synthase family. MurA subfamily.

It localises to the cytoplasm. The catalysed reaction is phosphoenolpyruvate + UDP-N-acetyl-alpha-D-glucosamine = UDP-N-acetyl-3-O-(1-carboxyvinyl)-alpha-D-glucosamine + phosphate. It functions in the pathway cell wall biogenesis; peptidoglycan biosynthesis. Its function is as follows. Cell wall formation. Adds enolpyruvyl to UDP-N-acetylglucosamine. In Wolinella succinogenes (strain ATCC 29543 / DSM 1740 / CCUG 13145 / JCM 31913 / LMG 7466 / NCTC 11488 / FDC 602W) (Vibrio succinogenes), this protein is UDP-N-acetylglucosamine 1-carboxyvinyltransferase.